The chain runs to 190 residues: MGIIVPVLTLVFLLFAKVSHGASNPRVILVGGSVGSWKVPDSPNNTLNHWAENNRFKVGDFIVWKYDMKVDSVLQVTKEDYESCNTANPLKQYNDGNTKVALDKSGPYFFISGAPGNCAKGEKITLVVLAERKSGGGSSSGDAPKVSPVSPTAQTPAPAPGPAAAHNAAVGLKVASGWFLTAVVVGLAMA.

The N-terminal stretch at 1–21 (MGIIVPVLTLVFLLFAKVSHG) is a signal peptide. The region spanning 26-130 (RVILVGGSVG…GEKITLVVLA (105 aa)) is the Phytocyanin domain. N44 carries an N-linked (GlcNAc...) asparagine glycan. A disulfide bridge links C84 with C118. The tract at residues 135-164 (GGGSSSGDAPKVSPVSPTAQTPAPAPGPAA) is disordered. Low complexity predominate over residues 151–164 (PTAQTPAPAPGPAA). N167 carries GPI-anchor amidated asparagine lipidation. Residues 168-190 (AAVGLKVASGWFLTAVVVGLAMA) constitute a propeptide, removed in mature form.

It belongs to the early nodulin-like (ENODL) family. Confined to flowers and siliques. Expressed in female gametophytes.

The protein localises to the cell membrane. May act as a carbohydrate transporter. Required, together with ENODL11, ENODL12, ENODL13, ENODL14 and ENODL15, for male-female communication and pollen tube reception and burst at the synergid cell surface of the female gametophyte. The chain is Early nodulin-like protein 12 from Arabidopsis thaliana (Mouse-ear cress).